The following is a 77-amino-acid chain: ATP synthase subunit c (77 aa).

The next 2 helical transmembrane spans lie at 10-30 (IAVA…FGNM) and 57-77 (GLID…LFVL).

The protein belongs to the ATPase C chain family. F-type ATPases have 2 components, F(1) - the catalytic core - and F(0) - the membrane proton channel. F(1) has five subunits: alpha(3), beta(3), gamma(1), delta(1), epsilon(1). F(0) has three main subunits: a(1), b(2) and c(10-14). The alpha and beta chains form an alternating ring which encloses part of the gamma chain. F(1) is attached to F(0) by a central stalk formed by the gamma and epsilon chains, while a peripheral stalk is formed by the delta and b chains.

The protein resides in the cell inner membrane. In terms of biological role, f(1)F(0) ATP synthase produces ATP from ADP in the presence of a proton or sodium gradient. F-type ATPases consist of two structural domains, F(1) containing the extramembraneous catalytic core and F(0) containing the membrane proton channel, linked together by a central stalk and a peripheral stalk. During catalysis, ATP synthesis in the catalytic domain of F(1) is coupled via a rotary mechanism of the central stalk subunits to proton translocation. Functionally, key component of the F(0) channel; it plays a direct role in translocation across the membrane. A homomeric c-ring of between 10-14 subunits forms the central stalk rotor element with the F(1) delta and epsilon subunits. The polypeptide is ATP synthase subunit c (Pseudoalteromonas translucida (strain TAC 125)).